Here is a 283-residue protein sequence, read N- to C-terminus: Bifunctional protein FolD (283 aa).

Residues 166 to 168, S191, and I232 contribute to the NADP(+) site; that span reads GAS.

Belongs to the tetrahydrofolate dehydrogenase/cyclohydrolase family. Homodimer.

It catalyses the reaction (6R)-5,10-methylene-5,6,7,8-tetrahydrofolate + NADP(+) = (6R)-5,10-methenyltetrahydrofolate + NADPH. It carries out the reaction (6R)-5,10-methenyltetrahydrofolate + H2O = (6R)-10-formyltetrahydrofolate + H(+). Its pathway is one-carbon metabolism; tetrahydrofolate interconversion. Its function is as follows. Catalyzes the oxidation of 5,10-methylenetetrahydrofolate to 5,10-methenyltetrahydrofolate and then the hydrolysis of 5,10-methenyltetrahydrofolate to 10-formyltetrahydrofolate. This is Bifunctional protein FolD from Chromobacterium violaceum (strain ATCC 12472 / DSM 30191 / JCM 1249 / CCUG 213 / NBRC 12614 / NCIMB 9131 / NCTC 9757 / MK).